The primary structure comprises 251 residues: MKKLMAANWKMYKTAGEARTTAASLAALTADTLPDDREVVIFPQFTALSPVADALRHATGYSVGGQDVYPAAEGAYTGEISPGMLMDCGCAWVLTGHSERRHVIGESDELVGAKTAFSINAGLKVVLCIGETIEEREAGRLGEVLERQLETGLAGVKGDAVPAAIAVAYEPVWAIGTGKVAGPPEIVEAHALVRQLLVARFGEGGVAVRILYGGSVKPENAREIIALDNVDGVLVGGASLQADSFSRIILA.

Residue 8–10 (NWK) coordinates substrate. His-97 functions as the Electrophile in the catalytic mechanism. Glu-170 serves as the catalytic Proton acceptor. Residues Gly-176, Ser-215, and 236-237 (GG) contribute to the substrate site.

This sequence belongs to the triosephosphate isomerase family. In terms of assembly, homodimer.

It localises to the cytoplasm. The catalysed reaction is D-glyceraldehyde 3-phosphate = dihydroxyacetone phosphate. The protein operates within carbohydrate biosynthesis; gluconeogenesis. Its pathway is carbohydrate degradation; glycolysis; D-glyceraldehyde 3-phosphate from glycerone phosphate: step 1/1. In terms of biological role, involved in the gluconeogenesis. Catalyzes stereospecifically the conversion of dihydroxyacetone phosphate (DHAP) to D-glyceraldehyde-3-phosphate (G3P). The polypeptide is Triosephosphate isomerase (Nitratidesulfovibrio vulgaris (strain DSM 19637 / Miyazaki F) (Desulfovibrio vulgaris)).